The chain runs to 266 residues: Signal peptidase I (266 aa).

Residues 1–20 (MQTDNTKSNTNKTAKQEWGS) lie on the Cytoplasmic side of the membrane. Residues 21-41 (FAFVICIALLIRILIMEPFNV) form a helical membrane-spanning segment. The Extracellular segment spans residues 42–266 (PTGSMKATIL…IFRNLYNTDA (225 aa)). Catalysis depends on residues S45 and K108.

This sequence belongs to the peptidase S26 family.

It localises to the cell membrane. It catalyses the reaction Cleavage of hydrophobic, N-terminal signal or leader sequences from secreted and periplasmic proteins.. The sequence is that of Signal peptidase I (lepB) from Rickettsia conorii (strain ATCC VR-613 / Malish 7).